The chain runs to 226 residues: Ribonuclease S-7 (226 aa).

An N-terminal signal peptide occupies residues 1–27 (MGITGMIYIVTMVFSLIVLILSSSTVG). Glutamine 36 lines the RNA pocket. Cysteine 42 and cysteine 49 form a disulfide bridge. Histidine 60 is a binding site for RNA. Histidine 60 functions as the Proton donor in the catalytic mechanism. Asparagine 74 and asparagine 77 each carry an N-linked (GlcNAc...) asparagine; alternate glycan. Cysteines 75 and 119 form a disulfide. RNA contacts are provided by residues 98–99 (NV), phenylalanine 108, 111–112 (KQ), and 115–116 (KH). Residue glutamine 112 is part of the active site. Histidine 116 functions as the Proton acceptor in the catalytic mechanism. Asparagine 126, asparagine 144, and asparagine 172 each carry an N-linked (GlcNAc...) asparagine glycan. 2 cysteine pairs are disulfide-bonded: cysteine 183/cysteine 220 and cysteine 198/cysteine 209.

Belongs to the RNase T2 family. The N-glycans attached at Asn-74 and Asn-77 consist of either monosaccharide (GlcNAc) or disaccharide (GlcNAc-GlcNAc) that could not be distinguished. The N-glycan at Asn-144 contains mannose and xylose, and at Asn-126 contains mannose, xylose and fucose. The N-glycan at Asn-172 consists of disaccharide (GlcNAc-GlcNAc).

The catalysed reaction is a ribonucleotidyl-ribonucleotide-RNA + H2O = a 3'-end 3'-phospho-ribonucleotide-RNA + a 5'-end dephospho-ribonucleoside-RNA + H(+). Self-incompatibility (SI) is the inherited ability of a flowering plant to prevent self-fertilization by discriminating between self and non-self pollen during pollination. In many species, self-incompatibility is controlled by the single, multiallelic locus S. The protein is Ribonuclease S-7 of Pyrus pyrifolia (Chinese pear).